We begin with the raw amino-acid sequence, 493 residues long: MTDQCVVSAPVRVRTRRLDVKETGALPAYRALAEHFGPDEVYLLESAAGPARDRRHQFVGFGALLSLSVTDRVVRVEGVPALRGLLLERAGALLEDGPQGLRLRTAGGLWPLLRAMRDMFDAEGSASGFRFGFLGFFGYDTARYIEDLPHLIENRPGLPDVRMVLHRGSVVTDLATGRCELLLHESPYWPGLAPETVTGLLADVEQAWPDPSADGFPASAVTDDSAPEVFANDVERCLKHIAVGDIYQVQIGHELSIRSTADPADVYQRLRGRNASPYMYLAGIDGHRLIGASPELFVRIEDGEVTMRPIAGTVPRSGADGGIAAGVRLRSDPKEIAEHTMLVDLCRNDIGRIARPNTLDVPDQLDVEGYSHVLHLVSTVVGRARVDTDAFDTIAALFPAGTMTGAPKIRAMEIIESVERSRRGLYAGALGLLDVGGYTNLALCIRTLFHHEGVYRTRASAGIVADSEPGAEWTETLAKMSATHWAVTGEELL.

It belongs to the anthranilate synthase component I family. The cofactor is Mg(2+).

The catalysed reaction is (2S)-2-amino-4-deoxychorismate + L-glutamate = chorismate + L-glutamine. Functionally, converts chorismate to 2-amino-4-deoxychorismate (ADIC). Involved in the biosynthesis of the benzoxazolinate moiety of the enediyne antitumor antibiotic C-1027. This chain is 2-amino-4-deoxychorismate synthase (sgcD), found in Streptomyces globisporus.